Consider the following 118-residue polypeptide: Acidic phospholipase A2 homolog (118 aa).

7 disulfide bridges follow: C11-C70, C25-C117, C27-C43, C42-C98, C49-C91, C59-C84, and C77-C89.

Belongs to the phospholipase A2 family. Group I subfamily. A49 sub-subfamily. As to expression, expressed by the venom gland.

It localises to the secreted. In terms of biological role, snake venom phospholipase A2 (PLA2) homolog that lacks both catalytic and neurotoxicity activities. In Bungarus fasciatus (Banded krait), this protein is Acidic phospholipase A2 homolog.